The chain runs to 451 residues: MRECISIHIGQAGIQVGNACWELYCLEHGIQADGQMPGDKTIGGGDDAFNTFFSETGAGKHVPRAVFVDLEPTVIDEVRTGTYRQLFHPEQLISGKEDAANNFARGHYTIGKEIVDLCLDRIRKLADNCTGLQGFLVFNAVGGGTGSGLGSLLLERLSVDYGKKSKLGFTVYPSPQVSTSVVEPYNSVLSTHSLLEHTDVAVLLDNEAIYDICRRSLDIERPTYTNLNRLVSQVISSLTASLRFDGALNVDVNEFQTNLVPYPRIHFMLSSYAPVISAEKAYHEQLSVAEITNSAFEPSSMMAKCDPRHGKYMACCLMYRGDVVPKDVNAAVATIKTKRTIQFVDWCPTGFKCGINYQPPSVVPGGDLAKVQRAVCMISNSTSVVEVFSRIDHKFDLMYAKRAFVHWYVGEGMEEGEFSEAREDLAALEKDYEEVGAEFDEGEEGDEGDEY.

A GTP-binding site is contributed by Q11. Residue K40 is modified to N6-acetyllysine. Residues E71, G144, T145, T179, N206, and N228 each contribute to the GTP site. E71 contributes to the Mg(2+) binding site. The active site involves E254.

It belongs to the tubulin family. Dimer of alpha and beta chains. A typical microtubule is a hollow water-filled tube with an outer diameter of 25 nm and an inner diameter of 15 nM. Alpha-beta heterodimers associate head-to-tail to form protofilaments running lengthwise along the microtubule wall with the beta-tubulin subunit facing the microtubule plus end conferring a structural polarity. Microtubules usually have 13 protofilaments but different protofilament numbers can be found in some organisms and specialized cells. Mg(2+) serves as cofactor. Undergoes a tyrosination/detyrosination cycle, the cyclic removal and re-addition of a C-terminal tyrosine residue by the enzymes tubulin tyrosine carboxypeptidase (TTCP) and tubulin tyrosine ligase (TTL), respectively. Post-translationally, acetylation of alpha chains at Lys-40 stabilizes microtubules and affects affinity and processivity of microtubule motors. This modification has a role in multiple cellular functions, ranging from cell motility, cell cycle progression or cell differentiation to intracellular trafficking and signaling.

It localises to the cytoplasm. It is found in the cytoskeleton. The enzyme catalyses GTP + H2O = GDP + phosphate + H(+). Tubulin is the major constituent of microtubules, a cylinder consisting of laterally associated linear protofilaments composed of alpha- and beta-tubulin heterodimers. Microtubules grow by the addition of GTP-tubulin dimers to the microtubule end, where a stabilizing cap forms. Below the cap, tubulin dimers are in GDP-bound state, owing to GTPase activity of alpha-tubulin. This Eleusine indica (Goosegrass) protein is Tubulin alpha-1 chain (TUBA1).